The chain runs to 1247 residues: Nidogen-1 (1247 aa).

Positions 1–28 are cleaved as a signal peptide; it reads MLASSSRIRAAWTRALLLPLLLAGPVGC. An NIDO domain is found at 106-268; that stretch reads PFLADLDTTD…GVWVFEIGSP (163 aa). Tyr-289 and Tyr-296 each carry sulfotyrosine. One can recognise an EGF-like 1 domain in the interval 386-426; that stretch reads SRQTCANNRHQCSVHAECRDYATGFCCSCVAGYTGNGRQCV. Cystine bridges form between Cys-390/Cys-403, Cys-397/Cys-412, Cys-411/Cys-618, Cys-414/Cys-425, Cys-672/Cys-685, Cys-679/Cys-695, Cys-697/Cys-708, Cys-714/Cys-727, Cys-721/Cys-736, Cys-738/Cys-750, Cys-762/Cys-777, Cys-769/Cys-787, Cys-789/Cys-800, Cys-806/Cys-817, Cys-811/Cys-826, Cys-828/Cys-839, Cys-849/Cys-878, Cys-889/Cys-896, and Cys-898/Cys-919. The region spanning 430-667 is the Nidogen G2 beta-barrel domain; sequence SPQRVNGKVK…GPVREGSPDA (238 aa). The EGF-like 2 domain occupies 668 to 709; the sequence is LQNPCYIGTHGCDTNAACRPGPRTQFTCECSIGFRGDGRTCY. The short motif at 702–704 is the Cell attachment site element; the sequence is RGD. The EGF-like 3; calcium-binding domain occupies 710–751; that stretch reads DIDECSEQPSVCGSHTICNNHPGTFRCECVEGYQFSDEGTCV. The 44-residue stretch at 758-801 folds into the EGF-like 4 domain; it reads PINYCETGLHNCDIPQRAQCIYTGGSSYTCSCLPGFSGDGQACQ. Residues 802-840 enclose the EGF-like 5; calcium-binding domain; the sequence is DVDECQPSRCHPDAFCYNTPGSFTCQCKPGYQGDGFRCV. The Thyroglobulin type-1 domain maps to 846–919; it reads KTRCQHEREH…RTRPGMTPPC (74 aa). Residues Thr-922 and Thr-935 are each glycosylated (O-linked (GalNAc...) threonine). 4 LDL-receptor class B repeats span residues 990 to 1032, 1033 to 1075, 1076 to 1120, and 1121 to 1162; these read KMVY…DHLG, RNIF…DSVR, GNLY…DAFS, and SQLC…YGKN. In terms of domain architecture, EGF-like 6 spans 1208–1244; sequence GHNYCSVNNGGCTHLCLATPGSRTCRCPDNTLGVDCI. Cystine bridges form between Cys-1212/Cys-1223, Cys-1219/Cys-1232, and Cys-1234/Cys-1243.

In terms of assembly, interacts with FBLN1. Interacts with LGALS3BP. Interacts with PLXDC1. Interacts with SVEP1. N- and O-glycosylated.

It is found in the secreted. The protein resides in the extracellular space. The protein localises to the extracellular matrix. Its subcellular location is the basement membrane. Sulfated glycoprotein widely distributed in basement membranes and tightly associated with laminin. Also binds to collagen IV and perlecan. It probably has a role in cell-extracellular matrix interactions. The polypeptide is Nidogen-1 (NID1) (Homo sapiens (Human)).